Here is a 488-residue protein sequence, read N- to C-terminus: Ribulose bisphosphate carboxylase large chain (488 aa).

Residues N127 and T177 each coordinate substrate. K179 acts as the Proton acceptor in catalysis. A substrate-binding site is contributed by K181. Mg(2+) contacts are provided by K205, D207, and E208. Position 205 is an N6-carboxylysine (K205). H297 functions as the Proton acceptor in the catalytic mechanism. Substrate-binding residues include R298, H330, and S382.

It belongs to the RuBisCO large chain family. Type I subfamily. Heterohexadecamer of 8 large chains and 8 small chains. Mg(2+) serves as cofactor.

It localises to the plastid. The protein localises to the chloroplast. The catalysed reaction is 2 (2R)-3-phosphoglycerate + 2 H(+) = D-ribulose 1,5-bisphosphate + CO2 + H2O. The enzyme catalyses D-ribulose 1,5-bisphosphate + O2 = 2-phosphoglycolate + (2R)-3-phosphoglycerate + 2 H(+). In terms of biological role, ruBisCO catalyzes two reactions: the carboxylation of D-ribulose 1,5-bisphosphate, the primary event in carbon dioxide fixation, as well as the oxidative fragmentation of the pentose substrate in the photorespiration process. Both reactions occur simultaneously and in competition at the same active site. This Gracilaria tenuistipitata var. liui (Red alga) protein is Ribulose bisphosphate carboxylase large chain.